The primary structure comprises 892 residues: Translation initiation factor IF-2 (892 aa).

Disordered regions lie at residues 32–102 (LAQA…PGDA) and 114–300 (KAPE…KQAE). The segment covering 35 to 48 (AGSSDTKNSPASKA) has biased composition (polar residues). Positions 139–166 (QEEKKESSEETSPERVEETLIIRTRTEP) are enriched in basic and acidic residues. Residues 200–211 (AASTEETTQQQP) show a composition bias toward low complexity. Residues 212–224 (RQNDAASYNNKQQ) show a composition bias toward polar residues. A compositionally biased stretch (low complexity) spans 225–238 (PSGTSSRPASSAPS). The span at 252–276 (RGSERDRSKRSDESVKAFTGRDRYG) shows a compositional bias: basic and acidic residues. Residues 397–566 (IRSPIVAFMG…ALQAEVLELK (170 aa)) form the tr-type G domain. Positions 406 to 413 (GHVDHGKT) are G1. 406 to 413 (GHVDHGKT) lines the GTP pocket. The segment at 431–435 (AITQH) is G2. The tract at residues 452–455 (DTPG) is G3. GTP-binding positions include 452–456 (DTPGH) and 506–509 (NKCD). The tract at residues 506-509 (NKCD) is G4. The interval 542 to 544 (SAK) is G5.

Belongs to the TRAFAC class translation factor GTPase superfamily. Classic translation factor GTPase family. IF-2 subfamily.

The protein localises to the cytoplasm. Functionally, one of the essential components for the initiation of protein synthesis. Protects formylmethionyl-tRNA from spontaneous hydrolysis and promotes its binding to the 30S ribosomal subunits. Also involved in the hydrolysis of GTP during the formation of the 70S ribosomal complex. This chain is Translation initiation factor IF-2, found in Chlamydia trachomatis serovar A (strain ATCC VR-571B / DSM 19440 / HAR-13).